The primary structure comprises 328 residues: Tyrosine recombinase XerC (328 aa).

The 88-residue stretch at 13-100 (QAPHPQIAAY…AWRGWFKWMA (88 aa)) folds into the Core-binding (CB) domain. Positions 122–319 (RLPKALSVEQ…DFQHLAKIYD (198 aa)) constitute a Tyr recombinase domain. Residues R162, K197, H271, R274, and H297 contribute to the active site. Residue Y306 is the O-(3'-phospho-DNA)-tyrosine intermediate of the active site.

Belongs to the 'phage' integrase family. XerC subfamily. Forms a cyclic heterotetrameric complex composed of two molecules of XerC and two molecules of XerD.

Its subcellular location is the cytoplasm. Functionally, site-specific tyrosine recombinase, which acts by catalyzing the cutting and rejoining of the recombining DNA molecules. The XerC-XerD complex is essential to convert dimers of the bacterial chromosome into monomers to permit their segregation at cell division. It also contributes to the segregational stability of plasmids. The protein is Tyrosine recombinase XerC of Ralstonia pickettii (strain 12J).